A 181-amino-acid chain; its full sequence is MDSGEVKISLEDSPSSGESFASTTSGPCCGSGRDLDIQVHESHIKDDQFPSRATSELQESKKSNKKCSSDLSTENSYAANKNVAEGLMDIALLSANANQLRFLITYNDKASTYIYSMIMVILSLVLQLLVGIMLIFKRRLKRFRNRSYERTNDLLVMGVFMITVINILLAAFTTTDGGGSH.

Positions methionine 1 to leucine 10 are enriched in basic and acidic residues. Residues methionine 1–serine 72 form a disordered region. Over methionine 1 to tyrosine 115 the chain is Extracellular. Residues aspartate 12–glycine 26 show a composition bias toward polar residues. Basic and acidic residues predominate over residues arginine 33–phenylalanine 49. The helix alpha1 stretch occupies residues asparagine 80 to alanine 91. Residues serine 94–alanine 110 are helix alpha2. Residues serine 116–phenylalanine 136 form a helical membrane-spanning segment. Over lysine 137–aspartate 153 the chain is Cytoplasmic. Residues leucine 154–threonine 174 traverse the membrane as a helical segment. At threonine 175 to histidine 181 the chain is on the extracellular side.

This sequence belongs to the ninjurin family.

The protein resides in the membrane. Effector of non-apoptotic necrotic cell death that mediates plasma membrane rupture (cytolysis): oligomerizes in response to death stimuli and promotes plasma membrane rupture by introducing hydrophilic faces of 2 alpha helices into the hydrophobic membrane, leading to release intracellular molecules that propagate the inflammatory response. Also acts as a homophilic transmembrane adhesion molecule that promotes cell adhesion by mediating homophilic interactions via its extracellular region. The polypeptide is Ninjurin-B (Drosophila melanogaster (Fruit fly)).